A 290-amino-acid polypeptide reads, in one-letter code: MLARFPLYLRLVRMDKPIGSLLLLWPTLNALWIASDGHPRWPLLAIFALGTLLMRSAGCAMNDYADRDFDRHVKRTADRPLTSGKIRAWEAVAIAVVLAFISFLLIQPLNTLTKELSVVALFVAGSYPFMKRFFAIPQAYLGIAFGFGIPMAFAAVQDTVPMLAWVMLIANIFWSVAYDTEYAMVDRDDDIKIGIRTSALTFGRFDVAAVMLCYAATLGIYVWIGVTLGFGLAYWAGWAAAVGCALYHYTLIKDRERMPCFAAFRHNNWLGGVLFAGIAAHYLLAGTAGN.

The next 6 helical transmembrane spans lie at 41–61 (WPLL…GCAM), 89–109 (WEAV…IQPL), 133–153 (FFAI…PMAF), 158–178 (DTVP…SVAY), 202–224 (FGRF…YVWI), and 269–289 (WLGG…GTAG).

Belongs to the UbiA prenyltransferase family. Mg(2+) is required as a cofactor.

It localises to the cell inner membrane. The catalysed reaction is all-trans-octaprenyl diphosphate + 4-hydroxybenzoate = 4-hydroxy-3-(all-trans-octaprenyl)benzoate + diphosphate. It participates in cofactor biosynthesis; ubiquinone biosynthesis. Functionally, catalyzes the prenylation of para-hydroxybenzoate (PHB) with an all-trans polyprenyl group. Mediates the second step in the final reaction sequence of ubiquinone-8 (UQ-8) biosynthesis, which is the condensation of the polyisoprenoid side chain with PHB, generating the first membrane-bound Q intermediate 3-octaprenyl-4-hydroxybenzoate. The protein is 4-hydroxybenzoate octaprenyltransferase of Burkholderia ambifaria (strain MC40-6).